Consider the following 2979-residue polypeptide: Polyketide synthase-nonribosomal peptide synthetase TwmB (2979 aa).

Residues 5–435 (GAEIAIIGSG…GTNAHAILES (431 aa)) form the Ketosynthase family 3 (KS3) domain. Catalysis depends on for beta-ketoacyl synthase activity residues C176, H315, and H355. A malonyl-CoA:ACP transacylase (MAT) domain region spans residues 549–864 (VFTGQGAQWA…PYTGLFTRGV (316 aa)). S643 serves as the catalytic For malonyltransferase activity. The N-terminal hotdog fold stretch occupies residues 936–1070 (HDLLGHLTPN…GRVRIHLGEA (135 aa)). Positions 936–1234 (HDLLGHLTPN…ECVPFSRQTA (299 aa)) are dehydratase (DH) domain. One can recognise a PKS/mFAS DH domain in the interval 936–1235 (HDLLGHLTPN…CVPFSRQTAK (300 aa)). H968 serves as the catalytic Proton acceptor; for dehydratase activity. Residues 1085–1235 (LVSVSEKKFY…CVPFSRQTAK (151 aa)) form a C-terminal hotdog fold region. D1141 (proton donor; for dehydratase activity) is an active-site residue. Positions 1387-1572 (NFTAHLAGIL…GIDTSTVEQP (186 aa)) are inactive methyltransferase (MT) domain. The tract at residues 2098–2271 (TYWLVGLTGG…AASVMDIGAV (174 aa)) is ketoreductase (KR)domain. The 86-residue stretch at 2380-2465 (RNNEEAYGIV…ELVDTATEAI (86 aa)) folds into the Carrier domain. S2425 carries the O-(pantetheine 4'-phosphoryl)serine modification. The tract at residues 2476–2497 (YPAEQTSSQNSDSGQDMASSFD) is disordered. Over residues 2479–2497 (EQTSSQNSDSGQDMASSFD) the composition is skewed to polar residues. Residues 2534 to 2970 (KSIPVSFTQA…MTLGQAALAE (437 aa)) form a condensation region.

Interacts with TwmE. Pantetheine 4'-phosphate serves as cofactor.

The catalysed reaction is 5-aminopentanoate + 7 malonyl-CoA + acetyl-CoA + 11 NADPH + 17 H(+) = wortmanamide A + 7 CO2 + 11 NADP(+) + 8 CoA + 6 H2O. The enzyme catalyses 5-aminopentanoate + 8 malonyl-CoA + acetyl-CoA + 13 NADPH + 20 H(+) = wortmanamide B + 8 CO2 + 13 NADP(+) + 9 CoA + 7 H2O. It participates in secondary metabolite biosynthesis. In terms of biological role, polyketide synthase-nonribosomal peptide synthetase; part of the gene cluster that mediates the biosynthesis of wortmanamides A and B, reduced long-chain polyketides amidated with a specific omega-amino acid, 5-aminopentanoic acid (5PA). The PKS modules of TwmB are involved in the synthesis of the polyketide backbone, whereas the non-canonical C domain of TwmB is a bonafide condensation domain that specifically selects 5PA and catalyzes amidation to release polyketide chain. The C domain clearly prefers C16 and C18 fatty acyl substrates, which is consistent with simultaneous formation of both octaketide and nonaketide acyl amides wortmanamides A and B. Because TwmB lacks a designated enoylreductase (ER) domain, the required activity is provided the enoyl reductase TwmE. The roles of the remaining enzymes have still to be clarified. This is Polyketide synthase-nonribosomal peptide synthetase TwmB from Talaromyces wortmannii (Penicillium wortmannii).